Reading from the N-terminus, the 325-residue chain is Aldo-keto reductase family 1 member A1 (325 aa).

A2 carries the post-translational modification N-acetylalanine. S4 is subject to Phosphoserine. NADP(+) is bound by residues 11–20 (GQKMPLIGLG), T21, and W22. Position 38 is a phosphoserine (S38). D45 serves as a coordination point for NADP(+). Y50 serves as the catalytic Proton donor. Residue K127 is modified to N6-acetyllysine; alternate. An N6-succinyllysine; alternate modification is found at K127. K145 carries the post-translational modification N6-succinyllysine. Residues S162, N163, S211, L213, S215, S216, K263, S264, I265, T266, R269, Q272, and N273 each coordinate NADP(+). Position 211 is a phosphoserine (S211).

The protein belongs to the aldo/keto reductase family. Monomer. In terms of tissue distribution, widely expressed. Highly expressed in kidney, salivary gland and liver. Detected in trachea, stomach, brain, lung, prostate, placenta, mammary gland, small intestine and lung.

It is found in the cytoplasm. The protein localises to the cytosol. The protein resides in the apical cell membrane. It carries out the reaction a primary alcohol + NADP(+) = an aldehyde + NADPH + H(+). The enzyme catalyses allyl alcohol + NADP(+) = acrolein + NADPH + H(+). The catalysed reaction is glycerol + NADP(+) = D-glyceraldehyde + NADPH + H(+). It catalyses the reaction glycerol + NADP(+) = L-glyceraldehyde + NADPH + H(+). It carries out the reaction hydroxyacetone + NADP(+) = methylglyoxal + NADPH + H(+). The enzyme catalyses a 4-hydroxynonen-1-ol + NADP(+) = a 4-hydroxynonenal + NADPH + H(+). The catalysed reaction is 3-deoxyfructose + NADP(+) = 3-deoxyglucosone + NADPH + H(+). It catalyses the reaction L-gulonate + NADP(+) = aldehydo-D-glucuronate + NADPH + H(+). It carries out the reaction L-gulono-1,4-lactone + NADP(+) = D-glucurono-3,6-lactone + NADPH + H(+). The enzyme catalyses pyridine 3-methanol + NADP(+) = pyridine-3-carbaldehyde + NADPH + H(+). The catalysed reaction is S-nitroso-CoA + NADPH + H(+) = sulfinamide-CoA + NADP(+). It catalyses the reaction S-nitrosoglutathione + NADPH + H(+) = S-(hydroxysulfenamide)glutathione + NADP(+). Its function is as follows. Catalyzes the NADPH-dependent reduction of a wide variety of carbonyl-containing compounds to their corresponding alcohols. Displays enzymatic activity towards endogenous metabolites such as aromatic and aliphatic aldehydes, ketones, monosaccharides and bile acids, with a preference for negatively charged substrates, such as glucuronate and succinic semialdehyde. Functions as a detoxifiying enzyme by reducing a range of toxic aldehydes. Reduces methylglyoxal and 3-deoxyglucosone, which are present at elevated levels under hyperglycemic conditions and are cytotoxic. Involved also in the detoxification of lipid-derived aldehydes like acrolein. Plays a role in the activation of procarcinogens, such as polycyclic aromatic hydrocarbon trans-dihydrodiols, and in the metabolism of various xenobiotics and drugs, including the anthracyclines doxorubicin (DOX) and daunorubicin (DAUN). Also acts as an inhibitor of protein S-nitrosylation by mediating degradation of S-nitroso-coenzyme A (S-nitroso-CoA), a cofactor required to S-nitrosylate proteins. S-nitroso-CoA reductase activity is involved in reprogramming intermediary metabolism in renal proximal tubules, notably by inhibiting protein S-nitrosylation of isoform 2 of PKM (PKM2). Also acts as a S-nitroso-glutathione reductase by catalyzing the NADPH-dependent reduction of S-nitrosoglutathione. Displays no reductase activity towards retinoids. This Homo sapiens (Human) protein is Aldo-keto reductase family 1 member A1 (AKR1A1).